The primary structure comprises 86 residues: Exodeoxyribonuclease 7 small subunit (86 aa).

It belongs to the XseB family. Heterooligomer composed of large and small subunits.

The protein localises to the cytoplasm. The enzyme catalyses Exonucleolytic cleavage in either 5'- to 3'- or 3'- to 5'-direction to yield nucleoside 5'-phosphates.. Functionally, bidirectionally degrades single-stranded DNA into large acid-insoluble oligonucleotides, which are then degraded further into small acid-soluble oligonucleotides. The sequence is that of Exodeoxyribonuclease 7 small subunit from Bacillus licheniformis (strain ATCC 14580 / DSM 13 / JCM 2505 / CCUG 7422 / NBRC 12200 / NCIMB 9375 / NCTC 10341 / NRRL NRS-1264 / Gibson 46).